Consider the following 277-residue polypeptide: Shikimate dehydrogenase (NADP(+)) (277 aa).

Shikimate contacts are provided by residues Ser14 to Ser16 and Thr61. Lys65 acts as the Proton acceptor in catalysis. Asp77 is a binding site for NADP(+). Asn86 and Asp102 together coordinate shikimate. NADP(+) contacts are provided by residues Gly127–Ala131, Asn151–Lys156, and Met215. Tyr217 is a shikimate binding site. Gly239 contributes to the NADP(+) binding site.

This sequence belongs to the shikimate dehydrogenase family. In terms of assembly, homodimer.

The enzyme catalyses shikimate + NADP(+) = 3-dehydroshikimate + NADPH + H(+). It functions in the pathway metabolic intermediate biosynthesis; chorismate biosynthesis; chorismate from D-erythrose 4-phosphate and phosphoenolpyruvate: step 4/7. Its function is as follows. Involved in the biosynthesis of the chorismate, which leads to the biosynthesis of aromatic amino acids. Catalyzes the reversible NADPH linked reduction of 3-dehydroshikimate (DHSA) to yield shikimate (SA). This Nitrosomonas eutropha (strain DSM 101675 / C91 / Nm57) protein is Shikimate dehydrogenase (NADP(+)).